The sequence spans 573 residues: AP-4 complex accessory subunit Tepsin (573 aa).

Residues 8-141 (RDRLSFLHRL…FSDAVPQPPS (134 aa)) form the ENTH domain. Disordered stretches follow at residues 136-155 (VPQP…MGAQ) and 194-311 (NAVR…NDCQ). The segment covering 137–150 (PQPPSQPPQIPPPA) has biased composition (pro residues). Polar residues predominate over residues 217 to 229 (PAVTPSASHTHPN). A compositionally biased stretch (low complexity) spans 260–293 (SSPSSQNSSCTSNLSRASDSGSRSGSDSHSGTSR). Over residues 294-303 (EPGDLAERAE) the composition is skewed to basic and acidic residues. Ser-400 carries the phosphoserine modification. A disordered region spans residues 497–526 (CSSEQGTESEQRLENTDTPEDSSSPLPWSP). Residues 526–536 (PNSLFAGMELV) are interaction with AP4B1. The tract at residues 563–573 (SEPSAFAFLNM) is interaction with AP4E1.

As to quaternary structure, interacts with AP4B1 and AP4E1; the interaction is direct and mediates the association of TEPSIN with the adapter-like complex 4 (AP-4), a heterotetramer composed of AP4B1, AP4E1, AP4M1 and AP4S1.

It is found in the golgi apparatus. The protein localises to the trans-Golgi network membrane. The protein resides in the cytoplasmic vesicle. Its subcellular location is the cytoplasm. It localises to the cytosol. In terms of biological role, associates with the adapter-like complex 4 (AP-4) and may therefore play a role in vesicular trafficking of proteins at the trans-Golgi network. In Mus musculus (Mouse), this protein is AP-4 complex accessory subunit Tepsin.